Here is a 425-residue protein sequence, read N- to C-terminus: Enolase (425 aa).

Residue glutamine 162 coordinates (2R)-2-phosphoglycerate. Glutamate 204 acts as the Proton donor in catalysis. Mg(2+) is bound by residues aspartate 241, glutamate 282, and aspartate 309. Residues lysine 334, arginine 363, serine 364, and lysine 385 each contribute to the (2R)-2-phosphoglycerate site. Catalysis depends on lysine 334, which acts as the Proton acceptor.

Belongs to the enolase family. Mg(2+) serves as cofactor.

The protein localises to the cytoplasm. It localises to the secreted. It is found in the cell surface. The catalysed reaction is (2R)-2-phosphoglycerate = phosphoenolpyruvate + H2O. It participates in carbohydrate degradation; glycolysis; pyruvate from D-glyceraldehyde 3-phosphate: step 4/5. Its function is as follows. Catalyzes the reversible conversion of 2-phosphoglycerate (2-PG) into phosphoenolpyruvate (PEP). It is essential for the degradation of carbohydrates via glycolysis. The polypeptide is Enolase (Corynebacterium diphtheriae (strain ATCC 700971 / NCTC 13129 / Biotype gravis)).